A 409-amino-acid polypeptide reads, in one-letter code: Argininosuccinate synthase (409 aa).

ATP is bound by residues 12–20 and A39; that span reads AYSGGLDTS. Residues Y90 and S95 each coordinate L-citrulline. An ATP-binding site is contributed by G120. Residues T122, N126, and D127 each contribute to the L-aspartate site. N126 lines the L-citrulline pocket. L-citrulline contacts are provided by R130, S181, S190, E266, and Y278.

The protein belongs to the argininosuccinate synthase family. Type 1 subfamily. Homotetramer.

It localises to the cytoplasm. It catalyses the reaction L-citrulline + L-aspartate + ATP = 2-(N(omega)-L-arginino)succinate + AMP + diphosphate + H(+). The protein operates within amino-acid biosynthesis; L-arginine biosynthesis; L-arginine from L-ornithine and carbamoyl phosphate: step 2/3. In Acidiphilium cryptum (strain JF-5), this protein is Argininosuccinate synthase.